The chain runs to 82 residues: Photosystem I iron-sulfur center (82 aa).

4Fe-4S ferredoxin-type domains lie at 2–31 (SHTV…MVPW) and 37–68 (GQIA…VRVY). [4Fe-4S] cluster contacts are provided by C11, C14, C17, C21, C48, C51, C54, and C58.

As to quaternary structure, the eukaryotic PSI reaction center is composed of at least 11 subunits. Requires [4Fe-4S] cluster as cofactor.

It localises to the plastid. It is found in the chloroplast thylakoid membrane. The enzyme catalyses reduced [plastocyanin] + hnu + oxidized [2Fe-2S]-[ferredoxin] = oxidized [plastocyanin] + reduced [2Fe-2S]-[ferredoxin]. Functionally, apoprotein for the two 4Fe-4S centers FA and FB of photosystem I (PSI); essential for photochemical activity. FB is the terminal electron acceptor of PSI, donating electrons to ferredoxin. The C-terminus interacts with PsaA/B/D and helps assemble the protein into the PSI complex. Required for binding of PsaD and PsaE to PSI. PSI is a plastocyanin/cytochrome c6-ferredoxin oxidoreductase, converting photonic excitation into a charge separation, which transfers an electron from the donor P700 chlorophyll pair to the spectroscopically characterized acceptors A0, A1, FX, FA and FB in turn. The chain is Photosystem I iron-sulfur center from Trieres chinensis (Marine centric diatom).